Reading from the N-terminus, the 520-residue chain is GMP synthase [glutamine-hydrolyzing] (520 aa).

Residues 9–202 form the Glutamine amidotransferase type-1 domain; the sequence is TILIIDFGSQ…VHRIVGVKPG (194 aa). Catalysis depends on Cys-86, which acts as the Nucleophile. Active-site residues include His-176 and Glu-178. One can recognise a GMPS ATP-PPase domain in the interval 203-395; it reads WTMGAYREQA…LGLPDSFIGR (193 aa). 230–236 lines the ATP pocket; it reads SGGVDSS.

In terms of assembly, homodimer.

The enzyme catalyses XMP + L-glutamine + ATP + H2O = GMP + L-glutamate + AMP + diphosphate + 2 H(+). Its pathway is purine metabolism; GMP biosynthesis; GMP from XMP (L-Gln route): step 1/1. Functionally, catalyzes the synthesis of GMP from XMP. In Brucella melitensis biotype 2 (strain ATCC 23457), this protein is GMP synthase [glutamine-hydrolyzing].